Here is a 546-residue protein sequence, read N- to C-terminus: E3 ubiquitin-protein ligase NEURL1B (546 aa).

The region spanning 38-194 is the NHR 1 domain; that stretch reads APRFHAQAKG…ITDEVQLLES (157 aa). Thr199 carries the phosphothreonine modification. The region spanning 270-424 is the NHR 2 domain; that stretch reads ELRFHATRGP…GVAGQLRLLG (155 aa). A disordered region spans residues 429–490; that stretch reads SSETMTPSGS…FSAPEPTGSR (62 aa). Residues 457–471 show a composition bias toward low complexity; the sequence is SSSASESSLVTAPSS. The RING-type zinc-finger motif lies at 494–534; that stretch reads CTVCFDSEVDTVIYTCGHMCLCHGCGLRLRRQARACCPICR.

Interacts with DLL1 and DLL4. In terms of tissue distribution, expressed in the limb buds and dorsal root ganglia. Expressed in brain and kidney and at low levels in the heart.

The protein localises to the cytoplasm. The enzyme catalyses S-ubiquitinyl-[E2 ubiquitin-conjugating enzyme]-L-cysteine + [acceptor protein]-L-lysine = [E2 ubiquitin-conjugating enzyme]-L-cysteine + N(6)-ubiquitinyl-[acceptor protein]-L-lysine.. Its pathway is protein modification; protein ubiquitination. Its function is as follows. E3 ubiquitin-protein ligase involved in regulation of the Notch pathway through influencing the stability and activity of several Notch ligands. This Mus musculus (Mouse) protein is E3 ubiquitin-protein ligase NEURL1B (Neurl1b).